The sequence spans 128 residues: Large ribosomal subunit protein bL17 (128 aa).

It belongs to the bacterial ribosomal protein bL17 family. Part of the 50S ribosomal subunit. Contacts protein L32.

The chain is Large ribosomal subunit protein bL17 from Glaesserella parasuis serovar 5 (strain SH0165) (Haemophilus parasuis).